A 267-amino-acid chain; its full sequence is DCN1-like protein 2 (267 aa).

Residues 1–48 (MTRKYTKKSSGSTASTTNSTAEIVDLTTSTSSVGKKRKSPDEKAQPIT) are disordered. Over residues 8–21 (KSSGSTASTTNSTA) the composition is skewed to low complexity. One can recognise a DCUN1 domain in the interval 75–262 (HYTYLYTYIF…LLDQFSEWVQ (188 aa)).

In Dictyostelium discoideum (Social amoeba), this protein is DCN1-like protein 2.